The primary structure comprises 332 residues: 2,3-diketo-L-gulonate reductase (332 aa).

Residue H44 is the Proton donor of the active site. NAD(+) is bound by residues 168–174, 224–225, and 304–306; these read ITMVDMS, WK, and GHE.

The protein belongs to the LDH2/MDH2 oxidoreductase family. DlgD subfamily. Homodimer.

The protein localises to the cytoplasm. It catalyses the reaction 3-dehydro-L-gulonate + NAD(+) = 2,3-dioxo-L-gulonate + NADH + H(+). It carries out the reaction 3-dehydro-L-gulonate + NADP(+) = 2,3-dioxo-L-gulonate + NADPH + H(+). Its function is as follows. Catalyzes the reduction of 2,3-diketo-L-gulonate in the presence of NADH, to form 3-keto-L-gulonate. The polypeptide is 2,3-diketo-L-gulonate reductase (Salmonella typhimurium (strain LT2 / SGSC1412 / ATCC 700720)).